A 507-amino-acid chain; its full sequence is ATP synthase subunit alpha, chloroplastic (507 aa).

An ATP-binding site is contributed by 170 to 177 (GDRQTGKT).

Belongs to the ATPase alpha/beta chains family. F-type ATPases have 2 components, CF(1) - the catalytic core - and CF(0) - the membrane proton channel. CF(1) has five subunits: alpha(3), beta(3), gamma(1), delta(1), epsilon(1). CF(0) has four main subunits: a, b, b' and c.

The protein resides in the plastid. Its subcellular location is the chloroplast thylakoid membrane. It catalyses the reaction ATP + H2O + 4 H(+)(in) = ADP + phosphate + 5 H(+)(out). Functionally, produces ATP from ADP in the presence of a proton gradient across the membrane. The alpha chain is a regulatory subunit. The protein is ATP synthase subunit alpha, chloroplastic of Cucumis sativus (Cucumber).